The primary structure comprises 366 residues: Aldo-keto reductase AFTS1 (366 aa).

Asp-75 lines the NADP(+) pocket. The active-site Proton donor is Tyr-80. His-172 lines the substrate pocket. Residues Ser-202 to Ser-203, Gln-228, Gly-257 to Pro-267, and Ser-329 to Ala-337 each bind NADP(+).

It belongs to the aldo/keto reductase family.

It participates in mycotoxin biosynthesis. Functionally, aldo-keto reductase; part of the gene clusters that mediate the biosynthesis of the host-selective toxins (HSTs) AF-toxins responsible for Alternaria black spot of strawberry disease by the strawberry pathotype. AF-toxin I and III are valine derivatives of 2,3-dyhydroxy-isovaleric acid and 2-hydroxy-isovaleric acid respectively, while AF II is an isoleucine derivative of 2-hydroxy-valeric acid. These derivatives are bound to a 9,10-epoxy-8-hydroxy-9-methyl-decatrienoic acid (EDA) moiety. On cellular level, AF-toxins affect plasma membrane of susceptible cells and cause a sudden increase in loss of K(+) after a few minutes of toxin treatment. The aldo-keto reductase AFTS1 catalyzes the conversion of 2-keto-isovaleric acid (2-KIV) to 2-hydroxy-isovaleric acid (2-HIV) by reduction of its ketone to an alcohol. The acyl-CoA ligase AFT1, the hydrolase AFT2 and the enoyl-CoA hydratases AFT3 and AFT6, but also the polyketide synthase AFT9, the acyl-CoA dehydrogenase AFT10, the cytochrome P450 monooxygenase AFT11 and the oxidoreductase AFT12 are all involved in the biosynthesis of the AK-, AF- and ACT-toxin common EDA structural moiety. The exact function of each enzyme, and of additional enzymes identified within the AF-toxin clusters have still to be determined. This Alternaria alternata (Alternaria rot fungus) protein is Aldo-keto reductase AFTS1.